The sequence spans 159 residues: Succinate dehydrogenase [ubiquinone] cytochrome b small subunit, mitochondrial (159 aa).

The transit peptide at 1–56 (MAVLLKLGVLCSGQGARALLLRSRVVRPAYVSAFLQDQPTQGRCGTQHIHLSPSHH) directs the protein to the mitochondrion. The Mitochondrial matrix portion of the chain corresponds to 57–63 (SGSKAAS). A helical membrane pass occupies residues 64–85 (LHWTSERVVSVLLLGLIPAGYL). Residues 86 to 90 (NPCSV) are Mitochondrial intermembrane-facing. Residues 91–111 (VDYSLAAALTLHSHWGLGQVV) traverse the membrane as a helical segment. H102 is a binding site for heme b. The Mitochondrial matrix portion of the chain corresponds to 112 to 120 (TDYVHGDTL). An a ubiquinone-binding site is contributed by Y114. A helical membrane pass occupies residues 121-142 (PKAARAGLLALSALTFAGLCYF). The Mitochondrial intermembrane segment spans residues 143 to 159 (NYHDVGICRAVAMLWKL).

Belongs to the CybS family. As to quaternary structure, component of complex II composed of four subunits: the flavoprotein (FP) SDHA, iron-sulfur protein (IP) SDHB, and a cytochrome b560 composed of SDHC and SDHD.

Its subcellular location is the mitochondrion inner membrane. It functions in the pathway carbohydrate metabolism; tricarboxylic acid cycle. In terms of biological role, membrane-anchoring subunit of succinate dehydrogenase (SDH) that is involved in complex II of the mitochondrial electron transport chain and is responsible for transferring electrons from succinate to ubiquinone (coenzyme Q). SDH also oxidizes malate to the non-canonical enol form of oxaloacetate, enol-oxaloacetate. Enol-oxaloacetate, which is a potent inhibitor of the succinate dehydrogenase activity, is further isomerized into keto-oxaloacetate. This is Succinate dehydrogenase [ubiquinone] cytochrome b small subunit, mitochondrial (Sdhd) from Mus musculus (Mouse).